Here is a 320-residue protein sequence, read N- to C-terminus: tRNA N6-adenosine threonylcarbamoyltransferase (320 aa).

Histidine 114 and histidine 118 together coordinate Fe cation. Substrate-binding positions include 136–140, aspartate 169, glycine 182, aspartate 186, and asparagine 273; that span reads VVSGG. Fe cation is bound at residue aspartate 297.

This sequence belongs to the KAE1 / TsaD family. It depends on Fe(2+) as a cofactor.

It is found in the cytoplasm. The enzyme catalyses L-threonylcarbamoyladenylate + adenosine(37) in tRNA = N(6)-L-threonylcarbamoyladenosine(37) in tRNA + AMP + H(+). Functionally, required for the formation of a threonylcarbamoyl group on adenosine at position 37 (t(6)A37) in tRNAs that read codons beginning with adenine. Is involved in the transfer of the threonylcarbamoyl moiety of threonylcarbamoyl-AMP (TC-AMP) to the N6 group of A37, together with TsaE and TsaB. TsaD likely plays a direct catalytic role in this reaction. The chain is tRNA N6-adenosine threonylcarbamoyltransferase from Ureaplasma urealyticum serovar 10 (strain ATCC 33699 / Western).